We begin with the raw amino-acid sequence, 2517 residues long: Non-reducing polyketide synthase pkbA (2517 aa).

The N-terminal acylcarrier protein transacylase domain (SAT) stretch occupies residues 59 to 250 (LERVAGPAEK…KRFDLRGRFH (192 aa)). A Ketosynthase family 3 (KS3) domain is found at 380 to 775 (SEPIAIIGMG…SANTVSSLKE (396 aa)). Residues Cys547, His682, and His721 each act as for beta-ketoacyl synthase activity in the active site. The segment at 849-1158 (AFGGQVARSV…TGTAALADAT (310 aa)) is malonyl-CoA:ACP transacylase (MAT) domain. Ser935 acts as the For acyl/malonyl transferase activity in catalysis. The tract at residues 1221 to 1353 (EEFLTFVKYK…GTVVLRENDT (133 aa)) is N-terminal hotdog fold. Residues 1221 to 1530 (EEFLTFVKYK…FTRVQISSLG (310 aa)) form the PKS/mFAS DH domain. The segment at 1251–1525 (FVKGHAVLAE…ILGAHFTRVQ (275 aa)) is product template (PT) domain. The active-site Proton acceptor; for dehydratase activity is His1255. Positions 1379–1530 (DCHILQGPVV…FTRVQISSLG (152 aa)) are C-terminal hotdog fold. The active-site Proton donor; for dehydratase activity is the Asp1437. One can recognise a Carrier 1 domain in the interval 1574 to 1651 (RPTLEISEKL…SISKCLASYL (78 aa)). O-(pantetheine 4'-phosphoryl)serine is present on Ser1611. A disordered region spans residues 1659–1684 (QPEDLADADSVESDSDMPTGAVTSGI). Positions 1662–1673 (DLADADSVESDS) are enriched in acidic residues. Positions 1685-1761 (TTPDDAVSRL…DLIALVPALN (77 aa)) constitute a Carrier 2 domain. At Ser1721 the chain carries O-(pantetheine 4'-phosphoryl)serine. The segment at 1976-2075 (LELGGGTGGT…IHRMLRPDGF (100 aa)) is methyltransferase (CMeT) domain. A thioesterase (TE) domain region spans residues 2200–2514 (LMIHGGGHIM…RGYDFLKEEV (315 aa)).

Pantetheine 4'-phosphate is required as a cofactor.

The enzyme catalyses 3 malonyl-CoA + acetyl-CoA + S-adenosyl-L-methionine + H(+) = 3-methylorsellinate + S-adenosyl-L-homocysteine + 3 CO2 + 4 CoA. It participates in phytotoxin biosynthesis. Functionally, non-reducing polyketide synthase; part of the gene cluster that mediates the biosynthesis of cichorine, a phytotoxin active against knapweed, corn, and soybeans. The first step in the pathway is performed by the non-reducing polyketide synthase pkbA that condenses one acetyl-CoA starter unit with 3 malonyl-CoA units. PkbA also catalyzes one methylation step to produce 3-methylorsellinate. The nonribosomal peptide synthase-like protein cicB, the cytochrome P450 monooxygenase cicH and the O-methyltransferase cicE are involved in the conversion of 3-methylorsellinate into nidulol. CicB converts 3-methylorsellinate to a yet unidentified intermediate, cicH may play a ring-closing role for cichorine and cicE is plausibly responsible for the methylation of one of the phenol groups. The oxidoreductase cicC acts downstream with still unidentified enzymes to further convert nidulol into cichorin. The polypeptide is Non-reducing polyketide synthase pkbA (Emericella nidulans (strain FGSC A4 / ATCC 38163 / CBS 112.46 / NRRL 194 / M139) (Aspergillus nidulans)).